The primary structure comprises 36 residues: Protein YmgL (36 aa).

The polypeptide is Protein YmgL (Escherichia coli (strain K12)).